Reading from the N-terminus, the 115-residue chain is Protein V2 (115 aa).

The protein belongs to the geminiviridae protein AV2/V2 family. In terms of assembly, interacts with host SGS3.

The protein resides in the host cytoplasm. It is found in the host perinuclear region. In terms of biological role, through its interaction with host SGS3, acts as a suppressor of RNA-mediated gene silencing, also known as post-transcriptional gene silencing (PTGS), a mechanism of plant viral defense that limits the accumulation of viral RNAs. The sequence is that of Protein V2 from Tomato yellow leaf curl China virus (TYLCCNV).